A 277-amino-acid chain; its full sequence is Elongation factor Ts (277 aa).

The segment at 81–84 (TDFV) is involved in Mg(2+) ion dislocation from EF-Tu.

This sequence belongs to the EF-Ts family.

The protein resides in the cytoplasm. Its function is as follows. Associates with the EF-Tu.GDP complex and induces the exchange of GDP to GTP. It remains bound to the aminoacyl-tRNA.EF-Tu.GTP complex up to the GTP hydrolysis stage on the ribosome. This chain is Elongation factor Ts, found in Amoebophilus asiaticus (strain 5a2).